A 990-amino-acid chain; its full sequence is TonB-dependent receptor P26 (990 aa).

The TonB box signature appears at 86-93 (DEVVVIGY). Residues 97-213 (RKSDLTGSVS…ANGVVLVTTK (117 aa)) form the TBDR plug domain. Positions 220 to 990 (SSKPEVSANI…TITLGLNVTF (771 aa)) constitute a TBDR beta-barrel domain. The interval 878-902 (TPENPTSDIPRAGGDSVTGTPPNSA) is disordered. A TonB C-terminal box motif is present at residues 974 to 990 (GSYPNPRTITLGLNVTF).

Belongs to the TonB-dependent receptor family.

The protein resides in the cell outer membrane. TonB-dependent receptor probably involved in ulvan degradation. Ulvan is the main polysaccharide component of the Ulvales (green seaweed) cell wall. It is composed of disaccharide building blocks comprising 3-sulfated rhamnose (Rha3S) linked to D-glucuronic acid (GlcA), L-iduronic acid (IduA), or D-xylose (Xyl). The TonB-dependent receptor may mediate transport of ulvan oligosaccharides from the surface of the outer membrane to the periplasm for subsequent degradation. This is TonB-dependent receptor P26 from Formosa agariphila (strain DSM 15362 / KCTC 12365 / LMG 23005 / KMM 3901 / M-2Alg 35-1).